The sequence spans 162 residues: uncharacterized protein (162 aa).

Residues 1-49 (MNSRTASARGWFSSRPPTSESDLEPATDGPASETTTLSPEATTFNDTRI) form a disordered region. Residues 32–46 (SETTTLSPEATTFND) show a composition bias toward polar residues. A helical membrane pass occupies residues 62–82 (MLLSFGIITVIGLAVALVLYI).

The protein resides in the membrane. This is an uncharacterized protein from Homo sapiens (Human).